The following is a 329-amino-acid chain: Malate dehydrogenase (329 aa).

12 to 18 contributes to the NAD(+) binding site; sequence GAAGQIG. The substrate site is built by Arg-93 and Arg-99. Residues Asn-106, Gln-113, and 130–132 contribute to the NAD(+) site; that span reads TGN. Residues Asn-132 and Arg-163 each contribute to the substrate site. Catalysis depends on His-188, which acts as the Proton acceptor.

This sequence belongs to the LDH/MDH superfamily. MDH type 2 family.

It carries out the reaction (S)-malate + NAD(+) = oxaloacetate + NADH + H(+). Functionally, catalyzes the reversible oxidation of malate to oxaloacetate. This chain is Malate dehydrogenase, found in Mycobacterium avium (strain 104).